We begin with the raw amino-acid sequence, 215 residues long: Urease accessory protein UreG (215 aa).

15–22 (GPVGSGKT) contributes to the GTP binding site.

The protein belongs to the SIMIBI class G3E GTPase family. UreG subfamily. Homodimer. UreD, UreF and UreG form a complex that acts as a GTP-hydrolysis-dependent molecular chaperone, activating the urease apoprotein by helping to assemble the nickel containing metallocenter of UreC. The UreE protein probably delivers the nickel.

The protein localises to the cytoplasm. In terms of biological role, facilitates the functional incorporation of the urease nickel metallocenter. This process requires GTP hydrolysis, probably effectuated by UreG. The polypeptide is Urease accessory protein UreG (Alcanivorax borkumensis (strain ATCC 700651 / DSM 11573 / NCIMB 13689 / SK2)).